Consider the following 305-residue polypeptide: Serine/threonine-protein phosphatase 4 catalytic subunit (305 aa).

Mn(2+)-binding residues include Asp-52, His-54, Asp-80, and Asn-112. The Proton donor role is filled by His-113. Mn(2+) contacts are provided by His-162 and His-236.

Belongs to the PPP phosphatase family. PP-4 (PP-X) subfamily. In terms of assembly, serine/threonine-protein phosphatase 4 (PP4) occurs in different assemblies of the catalytic and one or more regulatory subunits. Probably part of a PP4 complex containing ppp4c and ppp4r2. Interacts with smkA. Mn(2+) serves as cofactor.

The protein localises to the cytoplasm. The protein resides in the nucleus. The enzyme catalyses O-phospho-L-seryl-[protein] + H2O = L-seryl-[protein] + phosphate. It catalyses the reaction O-phospho-L-threonyl-[protein] + H2O = L-threonyl-[protein] + phosphate. Its function is as follows. Required for development, chemotaxis and the expression of numerous genes. The protein is Serine/threonine-protein phosphatase 4 catalytic subunit (ppp4c) of Dictyostelium discoideum (Social amoeba).